The sequence spans 173 residues: Calcium-binding protein 5 (173 aa).

4 EF-hand domains span residues 28-63 (DELD…MGYM), 82-99 (GRVD…KLLA), 105-140 (IGVQ…LLGE), and 142-173 (LTPR…MMSR). 4 residues coordinate Ca(2+): Asp41, Asp43, Asp45, and Asp52. Positions 118, 120, 122, 124, 129, 155, 157, 159, 161, and 166 each coordinate Ca(2+).

In terms of assembly, interacts with CACNA1C (via C-terminal CDB motif) in a calcium-dependent manner. Interacts with STXBP1. Interacts with MYO6. In terms of tissue distribution, expressed in inner and outer plexiform layers of the retina, and retinal bipolar cells (at protein level). Expressed in the inner hair cells (IHC) of the cochlea.

Its subcellular location is the cytoplasm. Its function is as follows. Inhibits calcium-dependent inactivation of L-type calcium channel and shifts voltage dependence of activation to more depolarized membrane potentials. Involved in the transmission of light signals. May positively regulate neurotransmitter vesicle endocytosis and exocytosis in a salt-dependent manner. May play a role in the extension and network organization of neurites. The protein is Calcium-binding protein 5 (Cabp5) of Mus musculus (Mouse).